The sequence spans 326 residues: o-succinylbenzoate synthase (326 aa).

Residue lysine 110 is the Proton donor of the active site. Mg(2+) contacts are provided by aspartate 138, glutamate 165, and aspartate 188. Lysine 212 serves as the catalytic Proton acceptor.

The protein belongs to the mandelate racemase/muconate lactonizing enzyme family. MenC type 1 subfamily. A divalent metal cation is required as a cofactor.

The catalysed reaction is (1R,6R)-6-hydroxy-2-succinyl-cyclohexa-2,4-diene-1-carboxylate = 2-succinylbenzoate + H2O. Its pathway is quinol/quinone metabolism; 1,4-dihydroxy-2-naphthoate biosynthesis; 1,4-dihydroxy-2-naphthoate from chorismate: step 4/7. It participates in quinol/quinone metabolism; menaquinone biosynthesis. Converts 2-succinyl-6-hydroxy-2,4-cyclohexadiene-1-carboxylate (SHCHC) to 2-succinylbenzoate (OSB). The protein is o-succinylbenzoate synthase of Mycobacterium bovis (strain ATCC BAA-935 / AF2122/97).